Consider the following 88-residue polypeptide: Sigma-conotoxin GVIIIA (88 aa).

A signal peptide spans 1–20 (MMSKMGAMFVLLLLFTLASS). A propeptide spanning residues 21–46 (LQEGDVQARKTRLKSDFYRALARDDR) is cleaved from the precursor. Position 55 is a 4-hydroxyproline (Pro55). Trp80 is modified (6'-bromotryptophan). Residue Ser87 is modified to Serine amide.

The protein belongs to the conotoxin S superfamily. Contains 5 disulfide bonds. Expressed by the venom duct.

The protein localises to the secreted. Functionally, sigma-conotoxins bind and inhibit serotonin-gated ion channels. This peptide selectively and reversibly inhibits 5-hydroxytryptamine 3 receptor (HTR3A) through competitive antagonism (IC(50)=53-86.8 nM). This is Sigma-conotoxin GVIIIA from Conus geographus (Geography cone).